The sequence spans 382 residues: uncharacterized protein (382 aa).

The next 12 helical transmembrane spans lie at 14–34, 45–65, 79–99, 102–122, 131–151, 157–177, 204–224, 235–255, 270–290, 291–311, 325–345, and 348–368; these read GLLL…LWLA, VVSS…GYVI, FIFA…SWLA, FVAG…LMCS, LLAA…LLVS, LMSV…PLLF, LGVN…GLMP, ASIG…QWPI, VQVF…AMAP, ALFI…AWAC, ALLL…AMLM, and FSDN…LLML.

Belongs to the major facilitator superfamily. YcaD (TC 2.A.1.26) family.

It is found in the cell inner membrane. This is an uncharacterized protein from Shigella flexneri serotype 5b (strain 8401).